A 143-amino-acid polypeptide reads, in one-letter code: Ribosome-binding factor A (143 aa).

The disordered stretch occupies residues 123 to 143 (DKSLQENYKQNDKETKAEKLR).

Belongs to the RbfA family. As to quaternary structure, monomer. Binds 30S ribosomal subunits, but not 50S ribosomal subunits or 70S ribosomes.

The protein localises to the cytoplasm. Its function is as follows. One of several proteins that assist in the late maturation steps of the functional core of the 30S ribosomal subunit. Associates with free 30S ribosomal subunits (but not with 30S subunits that are part of 70S ribosomes or polysomes). Required for efficient processing of 16S rRNA. May interact with the 5'-terminal helix region of 16S rRNA. The sequence is that of Ribosome-binding factor A from Francisella tularensis subsp. mediasiatica (strain FSC147).